We begin with the raw amino-acid sequence, 271 residues long: Methylthioribulose-1-phosphate dehydratase (271 aa).

Residue Cys-123 coordinates substrate. Zn(2+) contacts are provided by His-141 and His-143. The active-site Proton donor/acceptor is Glu-166. A Zn(2+)-binding site is contributed by His-231.

The protein belongs to the aldolase class II family. MtnB subfamily. The cofactor is Zn(2+).

Its subcellular location is the cytoplasm. It carries out the reaction 5-(methylsulfanyl)-D-ribulose 1-phosphate = 5-methylsulfanyl-2,3-dioxopentyl phosphate + H2O. The protein operates within amino-acid biosynthesis; L-methionine biosynthesis via salvage pathway; L-methionine from S-methyl-5-thio-alpha-D-ribose 1-phosphate: step 2/6. Its function is as follows. Catalyzes the dehydration of methylthioribulose-1-phosphate (MTRu-1-P) into 2,3-diketo-5-methylthiopentyl-1-phosphate (DK-MTP-1-P). The chain is Methylthioribulose-1-phosphate dehydratase from Candida dubliniensis (strain CD36 / ATCC MYA-646 / CBS 7987 / NCPF 3949 / NRRL Y-17841) (Yeast).